We begin with the raw amino-acid sequence, 240 residues long: UDP-2,3-diacylglucosamine hydrolase (240 aa).

The Mn(2+) site is built by aspartate 8, histidine 10, aspartate 41, asparagine 79, and histidine 114. 79 to 80 (NR) lines the substrate pocket. Substrate is bound by residues aspartate 122, serine 160, asparagine 164, lysine 167, and histidine 195. Mn(2+) is bound by residues histidine 195 and histidine 197.

This sequence belongs to the LpxH family. Mn(2+) serves as cofactor.

It localises to the cell inner membrane. It catalyses the reaction UDP-2-N,3-O-bis[(3R)-3-hydroxytetradecanoyl]-alpha-D-glucosamine + H2O = 2-N,3-O-bis[(3R)-3-hydroxytetradecanoyl]-alpha-D-glucosaminyl 1-phosphate + UMP + 2 H(+). The protein operates within glycolipid biosynthesis; lipid IV(A) biosynthesis; lipid IV(A) from (3R)-3-hydroxytetradecanoyl-[acyl-carrier-protein] and UDP-N-acetyl-alpha-D-glucosamine: step 4/6. Hydrolyzes the pyrophosphate bond of UDP-2,3-diacylglucosamine to yield 2,3-diacylglucosamine 1-phosphate (lipid X) and UMP by catalyzing the attack of water at the alpha-P atom. Involved in the biosynthesis of lipid A, a phosphorylated glycolipid that anchors the lipopolysaccharide to the outer membrane of the cell. The chain is UDP-2,3-diacylglucosamine hydrolase from Escherichia fergusonii (strain ATCC 35469 / DSM 13698 / CCUG 18766 / IAM 14443 / JCM 21226 / LMG 7866 / NBRC 102419 / NCTC 12128 / CDC 0568-73).